Reading from the N-terminus, the 324-residue chain is HTH-type transcriptional regulator CysB (324 aa).

Positions 1-59 (MKLQQLRYIVEVVNHNLNVSSTAEGLYTSQPGISKQVRMLEDELGIQIFARSGKHLTQV) constitute an HTH lysR-type domain. The H-T-H motif DNA-binding region spans 19–38 (VSSTAEGLYTSQPGISKQVR).

It belongs to the LysR transcriptional regulatory family. As to quaternary structure, homotetramer.

It localises to the cytoplasm. Functionally, this protein is a positive regulator of gene expression for the cysteine regulon, a system of 10 or more loci involved in the biosynthesis of L-cysteine from inorganic sulfate. The inducer for CysB is N-acetylserine. CysB inhibits its own transcription. This is HTH-type transcriptional regulator CysB (cysB) from Salmonella typhimurium (strain LT2 / SGSC1412 / ATCC 700720).